Reading from the N-terminus, the 207-residue chain is Small ribosomal subunit protein uS10m (207 aa).

The transit peptide at 1–24 directs the protein to the mitochondrion; sequence MLSVFGLRTVARCNSTLASGGARA.

Belongs to the universal ribosomal protein uS10 family. Part of the mitochondrial small ribosomal subunit.

It is found in the mitochondrion. Its function is as follows. Involved in mitochondrial genome encoded proteins translation. Involved in the binding of tRNA to the ribosomes. The chain is Small ribosomal subunit protein uS10m (RSM10) from Eremothecium gossypii (strain ATCC 10895 / CBS 109.51 / FGSC 9923 / NRRL Y-1056) (Yeast).